Consider the following 1013-residue polypeptide: Antigenic heat-stable 120 kDa protein (1013 aa).

Disordered stretches follow at residues Asp-1 to Pro-73 and Gly-348 to Gln-396. Residues Glu-12–Glu-27 are compositionally biased toward basic and acidic residues. Residues Ser-47–Ser-61 are compositionally biased toward low complexity. Polar residues-rich tracts occupy residues Gly-62–Pro-73, Gly-348–Gln-373, and Pro-380–Gln-396.

The protein resides in the cytoplasm. The sequence is that of Antigenic heat-stable 120 kDa protein (sca4) from Rickettsia rhipicephali.